The sequence spans 154 residues: MKFLCILLLASLAATSLAILNEPEDETHLEAQPTDASAQFIISNLQISTEDLSKEPSISREDLISKEPNVIRSPRQPQNQNPKLPLSILKEKQLRNATLGSEETTEHAPSDASTTEGKLMELGHKIMKNLENTVKEIIKYLKSLFPPASEVVKP.

The signal sequence occupies residues 1 to 18 (MKFLCILLLASLAATSLA). Residue Thr-34 is glycosylated (O-linked (GalNAc...) threonine; partial). Phosphoserine is present on residues Ser-48, Ser-53, Ser-57, Ser-59, and Ser-65. A compositionally biased stretch (basic and acidic residues) spans 51 to 65 (DLSKEPSISREDLIS). The interval 51-115 (DLSKEPSISR…EHAPSDASTT (65 aa)) is disordered. Asn-96 carries N-linked (GlcNAc...) asparagine glycosylation.

Belongs to the PP3/GlyCAM-1 family. In terms of tissue distribution, highly and specifically expressed in the lactating mammary gland.

The protein localises to the membrane. This is Glycosylation-dependent cell adhesion molecule 1 (GLYCAM1) from Capra hircus (Goat).